Consider the following 162-residue polypeptide: NADH-quinone oxidoreductase subunit I (162 aa).

4Fe-4S ferredoxin-type domains are found at residues 54–83 (RRYE…INST) and 93–122 (SSYE…ETNI). Residues C63, C66, C69, C73, C102, C105, C108, and C112 each coordinate [4Fe-4S] cluster.

Belongs to the complex I 23 kDa subunit family. As to quaternary structure, NDH-1 is composed of 14 different subunits. Subunits NuoA, H, J, K, L, M, N constitute the membrane sector of the complex. It depends on [4Fe-4S] cluster as a cofactor.

Its subcellular location is the cell inner membrane. It catalyses the reaction a quinone + NADH + 5 H(+)(in) = a quinol + NAD(+) + 4 H(+)(out). Functionally, NDH-1 shuttles electrons from NADH, via FMN and iron-sulfur (Fe-S) centers, to quinones in the respiratory chain. The immediate electron acceptor for the enzyme in this species is believed to be ubiquinone. Couples the redox reaction to proton translocation (for every two electrons transferred, four hydrogen ions are translocated across the cytoplasmic membrane), and thus conserves the redox energy in a proton gradient. This chain is NADH-quinone oxidoreductase subunit I, found in Francisella tularensis subsp. holarctica (strain FTNF002-00 / FTA).